Consider the following 431-residue polypeptide: Forkhead box protein N2 (431 aa).

Residues 112–208 constitute a DNA-binding region (fork-head); sequence KPPYSFSLLI…QALKKQPFSS (97 aa). Residues 364-387 are disordered; it reads DSGYASQPCAKISEKGQSGKKMRK.

The protein resides in the nucleus. Functionally, binds to the purine-rich region in HTLV-I LTR. The polypeptide is Forkhead box protein N2 (FOXN2) (Homo sapiens (Human)).